Here is a 333-residue protein sequence, read N- to C-terminus: NADH dehydrogenase (ubiquinone) complex I, assembly factor 6 (333 aa).

A mitochondrion-targeting transit peptide spans 1–44 (MAASAHGSVWGPLRLGIPGLCCRRPPLGLYARMRRLPGPEVSGR).

It belongs to the NDUFAF6 family. In terms of tissue distribution, widely expressed. A lower expression is observed in lung and kidney compared to heart, muscle and liver. In the kidney, expression is high in the basal zone of the proximal tubular cells.

The protein localises to the mitochondrion inner membrane. It is found in the cytoplasm. It localises to the nucleus. Functionally, involved in the assembly of mitochondrial NADH:ubiquinone oxidoreductase complex (complex I) at early stages. May play a role in the biogenesis of complex I subunit MT-ND1. This chain is NADH dehydrogenase (ubiquinone) complex I, assembly factor 6 (NDUFAF6), found in Homo sapiens (Human).